Reading from the N-terminus, the 513-residue chain is GMP synthase [glutamine-hydrolyzing] (513 aa).

The Glutamine amidotransferase type-1 domain maps to 9 to 198; sequence LILVLDFGSQ…VRRVCDCRGQ (190 aa). C86 acts as the Nucleophile in catalysis. Catalysis depends on residues H172 and E174. The GMPS ATP-PPase domain occupies 199–388; the sequence is WTMENFIEIE…LGIPEHLVWR (190 aa). 226-232 provides a ligand contact to ATP; the sequence is SGGVDSS.

Homodimer.

The enzyme catalyses XMP + L-glutamine + ATP + H2O = GMP + L-glutamate + AMP + diphosphate + 2 H(+). It functions in the pathway purine metabolism; GMP biosynthesis; GMP from XMP (L-Gln route): step 1/1. In terms of biological role, catalyzes the synthesis of GMP from XMP. The polypeptide is GMP synthase [glutamine-hydrolyzing] (Staphylococcus aureus (strain USA300)).